Reading from the N-terminus, the 3092-residue chain is Probable polyketide synthase 45 (3092 aa).

The Ketosynthase family 3 (KS3) domain occupies Asp10 to Glu430. Residues Cys170, His315, and His353 each act as for beta-ketoacyl synthase activity in the active site. The segment at Gly640–Tyr673 is acyl/malonyl transferase. The For acyl/malonyl transferase activity role is filled by Ser650. Residues Ile967–Asp1087 are N-terminal hotdog fold. A PKS/mFAS DH domain is found at Ile967–Gln1254. His999 (proton acceptor; for dehydratase activity) is an active-site residue. Residues Asn1103 to Gln1254 are C-terminal hotdog fold. Asp1165 functions as the Proton donor; for dehydratase activity in the catalytic mechanism. Positions Ser2566 to Met2644 constitute a Carrier domain. Ser2604 carries the post-translational modification O-(pantetheine 4'-phosphoryl)serine. The helical transmembrane segment at Asn2705–Ile2725 threads the bilayer.

Pantetheine 4'-phosphate serves as cofactor.

The protein resides in the membrane. Functionally, probable polyketide synthase. This is Probable polyketide synthase 45 (pks45) from Dictyostelium discoideum (Social amoeba).